A 433-amino-acid chain; its full sequence is Zinc finger and SCAN domain-containing protein 4 (433 aa).

In terms of domain architecture, SCAN box spans 44-126 (RMVLNSFQDS…RFMEDLTDDS (83 aa)). Polar residues-rich tracts occupy residues 162–184 (SAQT…TSLE) and 277–298 (QPEQ…NSTC). 2 disordered regions span residues 162-199 (SAQT…CNSS) and 272-298 (AGCI…NSTC). C2H2-type zinc fingers lie at residues 312–334 (YKCE…QRRH), 340–362 (FVCP…QIIH), 368–390 (FTCS…ERIH), and 396–418 (YTCP…MRTH). The segment at 414 to 433 (HMRTHEKITPPSVPSTPEAS) is disordered.

The protein resides in the nucleus. It localises to the chromosome. Its subcellular location is the telomere. Embryonic stem (ES) cell-specific transcription factor required to regulate ES cell pluripotency. Binds telomeres and plays a key role in genomic stability in ES cells by regulating telomere elongation. Acts as an activator of spontaneous telomere sister chromatid exchange (T-SCE) and telomere elongation in undifferentiated ES cells. The polypeptide is Zinc finger and SCAN domain-containing protein 4 (ZSCAN4) (Pongo pygmaeus (Bornean orangutan)).